A 339-amino-acid chain; its full sequence is mRNA cap guanine-N(7) methyltransferase 2 (339 aa).

In terms of domain architecture, mRNA cap 0 methyltransferase spans 1–277 (MAVTPHHRLY…LYSTFVFQKP (277 aa)). Residues lysine 14, aspartate 54, and 82 to 83 (DP) each bind S-adenosyl-L-methionine. The tract at residues 314–339 (VSRTDILPPADNEKGILGPGPADMRL) is disordered.

This sequence belongs to the class I-like SAM-binding methyltransferase superfamily. mRNA cap 0 methyltransferase family.

Its subcellular location is the nucleus. It carries out the reaction a 5'-end (5'-triphosphoguanosine)-ribonucleoside in mRNA + S-adenosyl-L-methionine = a 5'-end (N(7)-methyl 5'-triphosphoguanosine)-ribonucleoside in mRNA + S-adenosyl-L-homocysteine. Its function is as follows. mRNA-capping methyltransferase that methylates the N7 position of the added guanosine to the 5'-cap structure of mRNAs. Binds RNA containing 5'-terminal GpppC. The sequence is that of mRNA cap guanine-N(7) methyltransferase 2 from Oryza sativa subsp. japonica (Rice).